Here is a 143-residue protein sequence, read N- to C-terminus: Transcriptional regulator MraZ (143 aa).

2 SpoVT-AbrB domains span residues 5-47 (THSP…TTRE) and 76-119 (ANAE…DAGT).

Belongs to the MraZ family. Forms oligomers.

It is found in the cytoplasm. Its subcellular location is the nucleoid. The chain is Transcriptional regulator MraZ from Clavibacter michiganensis subsp. michiganensis (strain NCPPB 382).